Consider the following 274-residue polypeptide: HTH-type transcriptional regulator GadX (274 aa).

The 98-residue stretch at 145–242 (TRVCTVINNN…GMTPTEYQER (98 aa)) folds into the HTH araC/xylS-type domain. DNA-binding regions (H-T-H motif) lie at residues 162-183 (ARIA…REEE) and 209-232 (IKRV…RNYY).

In terms of assembly, homodimer.

Functionally, positively regulates the expression of about fifteen genes involved in acid resistance such as gadA, gadB and gadC. Depending on the conditions (growth phase and medium), can repress gadW. The protein is HTH-type transcriptional regulator GadX (gadX) of Escherichia coli (strain K12).